The sequence spans 224 residues: Prophage repressor CohE (224 aa).

The sequence is that of Prophage repressor CohE (cohE) from Escherichia coli (strain K12).